Consider the following 465-residue polypeptide: GTPase Der (465 aa).

EngA-type G domains follow at residues 3 to 166 (FLVA…LNEY) and 184 to 358 (IHFS…ACAN). GTP is bound by residues 9-16 (GRANVGKS), 56-60 (DTGGI), 118-121 (NKVD), 190-197 (GRPNVGKS), 237-241 (DTAGV), and 302-305 (NKWD). Residues 359–443 (KKITTADATR…PIVFEFKQSE (85 aa)) enclose the KH-like domain. The tract at residues 446-465 (FADRKNKRSKDEGSKSKKVK) is disordered.

The protein belongs to the TRAFAC class TrmE-Era-EngA-EngB-Septin-like GTPase superfamily. EngA (Der) GTPase family. In terms of assembly, associates with the 50S ribosomal subunit.

GTPase that plays an essential role in the late steps of ribosome biogenesis. This is GTPase Der from Francisella tularensis subsp. tularensis (strain WY96-3418).